A 199-amino-acid polypeptide reads, in one-letter code: NAD(P)H dehydrogenase (quinone) (199 aa).

The Flavodoxin-like domain maps to 4-190 (MLVLYYSAYG…DDARFQGRRV (187 aa)). FMN-binding positions include 10–15 (SAYGHM) and 78–80 (TRY). Tyr12 provides a ligand contact to NAD(+). Trp98 lines the substrate pocket. FMN contacts are provided by residues 113 to 119 (STATQHG) and His134. The tract at residues 158 to 181 (GAPYGMTTTADGDGSRQPSAQELD) is disordered. Positions 163–177 (MTTTADGDGSRQPSA) are enriched in polar residues.

The protein belongs to the WrbA family. The cofactor is FMN.

The catalysed reaction is a quinone + NADH + H(+) = a quinol + NAD(+). It carries out the reaction a quinone + NADPH + H(+) = a quinol + NADP(+). This chain is NAD(P)H dehydrogenase (quinone), found in Brucella ovis (strain ATCC 25840 / 63/290 / NCTC 10512).